The sequence spans 156 residues: ATP synthase subunit b (156 aa).

A helical transmembrane segment spans residues 5 to 25 (LTLIGQAIAFAFFVAFCMKFV).

Belongs to the ATPase B chain family. In terms of assembly, F-type ATPases have 2 components, F(1) - the catalytic core - and F(0) - the membrane proton channel. F(1) has five subunits: alpha(3), beta(3), gamma(1), delta(1), epsilon(1). F(0) has three main subunits: a(1), b(2) and c(10-14). The alpha and beta chains form an alternating ring which encloses part of the gamma chain. F(1) is attached to F(0) by a central stalk formed by the gamma and epsilon chains, while a peripheral stalk is formed by the delta and b chains.

Its subcellular location is the cell inner membrane. In terms of biological role, f(1)F(0) ATP synthase produces ATP from ADP in the presence of a proton or sodium gradient. F-type ATPases consist of two structural domains, F(1) containing the extramembraneous catalytic core and F(0) containing the membrane proton channel, linked together by a central stalk and a peripheral stalk. During catalysis, ATP synthesis in the catalytic domain of F(1) is coupled via a rotary mechanism of the central stalk subunits to proton translocation. Component of the F(0) channel, it forms part of the peripheral stalk, linking F(1) to F(0). The chain is ATP synthase subunit b from Acinetobacter baumannii (strain SDF).